Reading from the N-terminus, the 217-residue chain is MAGKEEIIAKAKDSITEFDEEMAQEAANEALVAGLDPVEIIEHGYTAGMQYVGDQFEQGTLFLPHVLAAAEAMKAGIEVLQPEMEKRKAKTTTLGTVIIGTIEGDIHSIGKDIVASMLNIAGFEVVDLGRDVAIKTFVEKAKELKPDIVATSALMTTTMVNQIQLEEQLKEAGIRGQVKTMVGGAPVTQGWADKIGADIYGESATDAVNKIKAAIKS.

The B12-binding N-terminal domain occupies 1–92; the sequence is MAGKEEIIAK…EMEKRKAKTT (92 aa). Positions 94–217 constitute a B12-binding domain; that stretch reads LGTVIIGTIE…VNKIKAAIKS (124 aa). His-107 contacts methylcob(III)alamin.

This sequence belongs to the methylamine corrinoid protein family. In terms of assembly, can form a complex with MttB.

It functions in the pathway one-carbon metabolism; methanogenesis from trimethylamine. Its function is as follows. Acts probably as a methyl group carrier between MttB and either MtbA or MtaA. This chain is Trimethylamine corrinoid protein 2 (mttC2), found in Methanosarcina acetivorans (strain ATCC 35395 / DSM 2834 / JCM 12185 / C2A).